The following is a 432-amino-acid chain: Proteinase-activated receptor 1 (432 aa).

A signal peptide spans 1–21 (MGPRRLLLVAVGLSLCGPLLS). The propeptide at 22–45 (SRVPMRQPESERMYATPYATPNPR) is removed for receptor activation. Residues 46–109 (SFFLRNPSED…SGYLTSPWLT (64 aa)) lie on the Extracellular side of the membrane. N-linked (GlcNAc...) asparagine glycosylation is found at Asn-69 and Asn-82. The helical transmembrane segment at 110-135 (LFIPSVYTFVFIVSLPLNILAIAVFV) threads the bilayer. The Cytoplasmic segment spans residues 136 to 144 (FRMKVKKPA). The chain crosses the membrane as a helical span at residues 145-164 (VVYMLHLAMADVLFVSVLPF). At 165-183 (KISYYFSGTDWQFGSGMCR) the chain is on the extracellular side. Cysteines 182 and 261 form a disulfide. A helical membrane pass occupies residues 184 to 205 (FATAACYCNMYASIMLMTVISI). Over 206 to 225 (DRFLAVVYPIQSLSWRTLGR) the chain is Cytoplasmic. A helical membrane pass occupies residues 226–246 (ANFTCVVIWVMAIMGVVPLLL). Residues 247–275 (KEQTTQVPGLNITTCHDVLNETLLHGFYS) lie on the Extracellular side of the membrane. 2 N-linked (GlcNAc...) asparagine glycosylation sites follow: Asn-257 and Asn-266. The chain crosses the membrane as a helical span at residues 276–295 (YYFSAFSAIFFLVPLIISTV). At 296 to 318 (CYTSIIRCLSSSAVANRSKKSRA) the chain is on the cytoplasmic side. A helical transmembrane segment spans residues 319–341 (LFLSAAVFCIFIVCFGPTNVLLI). At 342–357 (VHYLLLSDSPGTETAY) the chain is on the extracellular side. A helical transmembrane segment spans residues 358-381 (FAYLLCVCVTSVASCIDPLIYYYA). At 382–432 (SSECQKHLYSILCCRESSDSNSCNSTGQLMPSKMDTCSSHLNNSIYKKLLA) the chain is on the cytoplasmic side. The residue at position 425 (Ser-425) is a Phosphoserine.

Belongs to the G-protein coupled receptor 1 family. In terms of processing, proteolytic cleavage by thrombin generates a new N-terminus that functions as a tethered ligand. Also proteolytically cleaved by cathepsin CTSG. Post-translationally, phosphorylated in the C-terminal tail; probably mediating desensitization prior to the uncoupling and internalization of the receptor. In terms of tissue distribution, expressed in primary cultured oligodendrocytes.

Its subcellular location is the cell membrane. High affinity receptor that binds the activated thrombin, leading to calcium release from intracellular stores. The thrombin-activated receptor signaling pathway is mediated through PTX-insensitive G proteins, activation of phospholipase C resulting in the production of 1D-myo-inositol 1,4,5-trisphosphate (InsP3) which binds to InsP3 receptors causing calcium release from the stores. In astrocytes, the calcium released into the cytosol allows the Ca(2+)-dependent release of L-glutamate into the synaptic cleft through BEST1, that targets the neuronal postsynaptic GRIN2A/NMDAR receptor resulting in the synaptic plasticity regulation. May play a role in platelets activation and in vascular development. Mediates up-regulation of pro-inflammatory cytokines, such as MCP-1/CCL2 and IL6, triggered by coagulation factor Xa (F10) in cardiac fibroblasts and umbilical vein endothelial cells. This is Proteinase-activated receptor 1 from Rattus norvegicus (Rat).